A 78-amino-acid polypeptide reads, in one-letter code: RNA-binding protein KhpA (78 aa).

One can recognise a KH domain in the interval 29–78; sequence TIIYELTVAKGDIGKIIGKEGRTIKAIRTLLVSVASRDNVKVSLEIMEER.

The protein belongs to the KhpA RNA-binding protein family.

The protein resides in the cytoplasm. Its function is as follows. A probable RNA-binding protein. In Chlamydia muridarum (strain MoPn / Nigg), this protein is RNA-binding protein KhpA.